The following is a 251-amino-acid chain: Flap endonuclease Xni (251 aa).

Position 104 (D104) interacts with Mg(2+). Positions 160–249 (VQPQQLPDYW…IDGNLQQLRL (90 aa)) constitute a 5'-3' exonuclease domain. Residues L171, A172, P180, V182, and I185 each coordinate K(+). Positions 184 to 189 (GIGPKS) are interaction with DNA.

Belongs to the Xni family. Mg(2+) is required as a cofactor. Requires K(+) as cofactor.

Its function is as follows. Has flap endonuclease activity. During DNA replication, flap endonucleases cleave the 5'-overhanging flap structure that is generated by displacement synthesis when DNA polymerase encounters the 5'-end of a downstream Okazaki fragment. The sequence is that of Flap endonuclease Xni from Escherichia coli O7:K1 (strain IAI39 / ExPEC).